The primary structure comprises 154 residues: 3-dehydroquinate dehydratase (154 aa).

The active-site Proton acceptor is the Y26. Positions 77, 83, and 90 each coordinate substrate. The active-site Proton donor is the H103. Residues 104 to 105 and R114 contribute to the substrate site; that span reads IS.

This sequence belongs to the type-II 3-dehydroquinase family. In terms of assembly, homododecamer.

It carries out the reaction 3-dehydroquinate = 3-dehydroshikimate + H2O. The protein operates within metabolic intermediate biosynthesis; chorismate biosynthesis; chorismate from D-erythrose 4-phosphate and phosphoenolpyruvate: step 3/7. Functionally, catalyzes a trans-dehydration via an enolate intermediate. The sequence is that of 3-dehydroquinate dehydratase from Buchnera aphidicola subsp. Baizongia pistaciae (strain Bp).